The chain runs to 194 residues: Putative manganese efflux pump MntP (194 aa).

Transmembrane regions (helical) follow at residues proline 3–glycine 23, leucine 37–leucine 57, aspartate 69–leucine 89, leucine 110–phenylalanine 132, cysteine 147–glycine 167, and methionine 172–glycine 192.

Belongs to the MntP (TC 9.B.29) family.

The protein localises to the cell inner membrane. Probably functions as a manganese efflux pump. This Xanthomonas axonopodis pv. citri (strain 306) protein is Putative manganese efflux pump MntP.